The sequence spans 138 residues: Large ribosomal subunit protein uL16 (138 aa).

Residues 1 to 13 are compositionally biased toward basic residues; sequence MLQPKRRKYRKEQ. The tract at residues 1-20 is disordered; that stretch reads MLQPKRRKYRKEQKGRNTGI.

Belongs to the universal ribosomal protein uL16 family. As to quaternary structure, part of the 50S ribosomal subunit.

Functionally, binds 23S rRNA and is also seen to make contacts with the A and possibly P site tRNAs. The sequence is that of Large ribosomal subunit protein uL16 from Burkholderia mallei (strain NCTC 10247).